The chain runs to 121 residues: Small ribosomal subunit protein bS21m (121 aa).

Residues 1-14 (MNSSYFPGVLGVRW) constitute a mitochondrion transit peptide.

This sequence belongs to the bacterial ribosomal protein bS21 family. In terms of assembly, component of the mitochondrial small ribosomal subunit (mt-SSU). Mature yeast 74S mitochondrial ribosomes consist of a small (37S) and a large (54S) subunit. The 37S small subunit contains a 15S ribosomal RNA (15S mt-rRNA) and at least 32 different proteins. The 54S large subunit contains a 21S rRNA (21S mt-rRNA) and at least 45 different proteins.

It localises to the mitochondrion. Component of the mitochondrial ribosome (mitoribosome), a dedicated translation machinery responsible for the synthesis of mitochondrial genome-encoded proteins, including at least some of the essential transmembrane subunits of the mitochondrial respiratory chain. The mitoribosomes are attached to the mitochondrial inner membrane and translation products are cotranslationally integrated into the membrane. In Schizosaccharomyces pombe (strain 972 / ATCC 24843) (Fission yeast), this protein is Small ribosomal subunit protein bS21m (mrp21).